Here is a 549-residue protein sequence, read N- to C-terminus: MCRIRTFRLRRKRRVSGRSFCRSRIDPGYVRERPYIGGRSRPTTFHLTRKKKAPLGGDLSPSFARSPVLEPSSPPQALSVPSLSSEKKTASPTCVKHHLSGGAVRRANTVVPRTKKRTSRHHTLMSTTCRCWSSSIVLYEHLDARVSDVGKTSRRRRCSLGGTLSGSIISIVAKRDCDYDEPHHLFFMLLLYKRLMSTTLGISHLVKHARFSSLQGTLGSLKGTVYRPKQKTHTCNRSTTSNDTKTQSYNALFMERTWNKKTIAARAKPKPSGEAGASFPTQSLGSLSSFFFPDSLKNHRHSPMTRNQLLEHKRSQQVETNKLDDAITLYCVYIDRCEFVGKKRRCMMHNDRETGDCSSLPNANTQTHRFPSPHKEMRPPPTNEADSCSSYDGALARRASSPLREGTSGSSAHRPKQQCLLHCHQSISCILFPPNSSPQHQFALLRKVVATAAAATGRSSSPRPQTLYMCRKCVNTCYCPMRLVHRYMFQNLLIHLRAHRLGVSSSSNWPTFSTTVVNPCTTTPIKTTSSSSPRPRNDTRSPPILGMCF.

Disordered regions lie at residues K50–P92, E353–Y391, and T523–P542. Polar residues-rich tracts occupy residues P75–S84 and D356–R369. Over residues T523–R534 the composition is skewed to low complexity.

Its function is as follows. This viral structural protein may have important functions, such as protein kinase activity, DNA binding, and possible transcriptional activation of immediate-early genes. The chain is Tegument protein from Homo sapiens (Human).